Reading from the N-terminus, the 933-residue chain is DNA repair-scaffolding protein (933 aa).

3 disordered regions span residues 1-34 (MSGA…LRRG), 67-174 (SEKT…KGTL), and 205-224 (YSSD…IDSE). Composition is skewed to basic and acidic residues over residues 16–29 (WHIE…ERSQ), 71–87 (GITE…KTET), and 119–132 (RDGR…RLGD). The segment covering 138 to 148 (PEDEDIEDELQ) has biased composition (acidic residues). Residues 175 to 469 (DISDCDSCAS…GTGWTHGHEK (295 aa)) are necessary for interaction with RAD51. The segment covering 214-224 (DPEHSLFIDSE) has biased composition (basic and acidic residues).

Found in a complex, at least composed of BLM, RAD51 and SPIDR; the complex formation is mediated by SPIDR. Interacts (via C-terminal region) with BLM; the interaction is direct. Interacts with RAD51; the interaction is direct. Interacts (via the C-terminal region) with FIGNL1 (via N-terminal one-half region); the interaction is direct.

The protein resides in the nucleus. In terms of biological role, plays a role in DNA double-strand break (DBS) repair via homologous recombination (HR). Serves as a scaffolding protein that helps to promote the recruitment of DNA-processing enzymes like the helicase BLM and recombinase RAD51 to site of DNA damage, and hence contributes to maintain genomic integrity. The chain is DNA repair-scaffolding protein (Spidr) from Mus musculus (Mouse).